The primary structure comprises 468 residues: 3-isopropylmalate dehydratase large subunit (468 aa).

Residues Cys347, Cys407, and Cys410 each coordinate [4Fe-4S] cluster. Over residues 424-441 (SASSSNRNFKGRQGSPSG) the composition is skewed to polar residues. The segment at 424-443 (SASSSNRNFKGRQGSPSGRT) is disordered.

The protein belongs to the aconitase/IPM isomerase family. LeuC type 1 subfamily. As to quaternary structure, heterodimer of LeuC and LeuD. The cofactor is [4Fe-4S] cluster.

The catalysed reaction is (2R,3S)-3-isopropylmalate = (2S)-2-isopropylmalate. Its pathway is amino-acid biosynthesis; L-leucine biosynthesis; L-leucine from 3-methyl-2-oxobutanoate: step 2/4. Its function is as follows. Catalyzes the isomerization between 2-isopropylmalate and 3-isopropylmalate, via the formation of 2-isopropylmaleate. This is 3-isopropylmalate dehydratase large subunit from Prochlorococcus marinus (strain MIT 9215).